The chain runs to 803 residues: Leucine--tRNA ligase (803 aa).

The short motif at 40–51 is the 'HIGH' region element; it reads PYPSGQGLHVGH. Residues 575–579 carry the 'KMSKS' region motif; that stretch reads KMSKS. Lys578 contacts ATP.

This sequence belongs to the class-I aminoacyl-tRNA synthetase family.

It localises to the cytoplasm. It carries out the reaction tRNA(Leu) + L-leucine + ATP = L-leucyl-tRNA(Leu) + AMP + diphosphate. The polypeptide is Leucine--tRNA ligase (Lacticaseibacillus paracasei (strain ATCC 334 / BCRC 17002 / CCUG 31169 / CIP 107868 / KCTC 3260 / NRRL B-441) (Lactobacillus paracasei)).